The following is a 262-amino-acid chain: Acyl-coenzyme A diphosphatase FITM2 (262 aa).

Over 1–23 (MEHLERCAWVLRGTLVRAAVRRY) the chain is Cytoplasmic. Residues 24–44 (LPWALAASMLAGSLLKELSPL) form a helical membrane-spanning segment. Over 45–57 (PESYLSNKRNVLN) the chain is Lumenal. Residues 58-78 (VYFVKVAWAWTFCLLLPFIAL) traverse the membrane as a helical segment. Residues 79–93 (TNYHLTGKAGLVLRR) lie on the Cytoplasmic side of the membrane. Residues 94–114 (LSTLLVGTAIWYVCTAIFSNV) traverse the membrane as a helical segment. The Lumenal portion of the chain corresponds to 115-145 (EHYTGSCYQSPALEGVRNEPLSKQQCHGQGG). Residues 146-166 (FWHGFDISGHSFLLTFCALMI) traverse the membrane as a helical segment. Residue His-155 is part of the active site. Residues 167–185 (VEEMAVLHEVKTDRSHCLH) are Cytoplasmic-facing. A helical transmembrane segment spans residues 186–206 (VAITALVVALGFLTFIWVWMF). Residues 207–218 (LCTAVYFHNLSQ) lie on the Lumenal side of the membrane. His-214 is an active-site residue. A helical membrane pass occupies residues 219 to 239 (KVFGTLFGLLGWYGTYGFWYL). Residues 240-262 (KSFSPGLPPQSCSSNLKQDSYKR) lie on the Cytoplasmic side of the membrane.

It belongs to the FIT family. FIT2 subfamily.

The protein resides in the endoplasmic reticulum membrane. It carries out the reaction an acyl-CoA + H2O = an acyl-4'-phosphopantetheine + adenosine 3',5'-bisphosphate + 2 H(+). It catalyses the reaction (9Z)-octadecenoyl-CoA + H2O = S-(9Z-octadecenoyl)-4'-phosphopantetheine + adenosine 3',5'-bisphosphate + 2 H(+). The catalysed reaction is (5Z,8Z,11Z,14Z)-eicosatetraenoyl-CoA + H2O = S-(5Z,8Z,11Z,14Z-eicosatetraenoyl)-4'-phosphopantetheine + adenosine 3',5'-bisphosphate + 2 H(+). The enzyme catalyses hexadecanoyl-CoA + H2O = S-hexadecanoyl-4'-phosphopantetheine + adenosine 3',5'-bisphosphate + 2 H(+). Functionally, fatty acyl-coenzyme A (CoA) diphosphatase that hydrolyzes fatty acyl-CoA to yield acyl-4'-phosphopantetheine and adenosine 3',5'-bisphosphate. Preferentially hydrolyzes unsaturated long-chain acyl-CoA substrates such as oleoyl-CoA/(9Z)-octadecenoyl-CoA and arachidonoyl-CoA/(5Z,8Z,11Z,14Z)-eicosatetraenoyl-CoA in the endoplasmic reticulum (ER) lumen. This catalytic activity is required for maintaining ER structure and for lipid droplets (LDs) biogenesis, which are lipid storage organelles involved in maintaining lipid and energy homeostasis. Directly binds to diacylglycerol (DAGs) and triacylglycerol, which is also important for LD biogenesis. May support directional budding of nacent LDs from the ER into the cytosol by reducing DAG levels at sites of LD formation. Plays a role in the regulation of cell morphology and cytoskeletal organization. This is Acyl-coenzyme A diphosphatase FITM2 from Sus scrofa (Pig).